A 236-amino-acid polypeptide reads, in one-letter code: 2-C-methyl-D-erythritol 4-phosphate cytidylyltransferase (236 aa).

This sequence belongs to the IspD/TarI cytidylyltransferase family. IspD subfamily.

It catalyses the reaction 2-C-methyl-D-erythritol 4-phosphate + CTP + H(+) = 4-CDP-2-C-methyl-D-erythritol + diphosphate. It functions in the pathway isoprenoid biosynthesis; isopentenyl diphosphate biosynthesis via DXP pathway; isopentenyl diphosphate from 1-deoxy-D-xylulose 5-phosphate: step 2/6. Catalyzes the formation of 4-diphosphocytidyl-2-C-methyl-D-erythritol from CTP and 2-C-methyl-D-erythritol 4-phosphate (MEP). The polypeptide is 2-C-methyl-D-erythritol 4-phosphate cytidylyltransferase (Burkholderia vietnamiensis (strain G4 / LMG 22486) (Burkholderia cepacia (strain R1808))).